We begin with the raw amino-acid sequence, 355 residues long: tRNA uridine(34) hydroxylase (355 aa).

The Rhodanese domain occupies 146 to 240 (KDPDALFVDM…YVRTAKKKDL (95 aa)). The active-site Cysteine persulfide intermediate is Cys-200.

It belongs to the TrhO family.

The enzyme catalyses uridine(34) in tRNA + AH2 + O2 = 5-hydroxyuridine(34) in tRNA + A + H2O. In terms of biological role, catalyzes oxygen-dependent 5-hydroxyuridine (ho5U) modification at position 34 in tRNAs. This chain is tRNA uridine(34) hydroxylase, found in Hamiltonella defensa subsp. Acyrthosiphon pisum (strain 5AT).